The chain runs to 261 residues: Phosphatidylglycerol--prolipoprotein diacylglyceryl transferase (261 aa).

Helical transmembrane passes span 17–37 (FGIH…LWLG), 60–80 (ALFY…ALFY), 92–112 (ILFL…VMVA), and 121–141 (GLTF…GLGA). An a 1,2-diacyl-sn-glycero-3-phospho-(1'-sn-glycerol)-binding site is contributed by Arg-143. A run of 3 helical transmembrane segments spans residues 175–195 (PSQL…LWWY), 203–223 (GSVS…VEFT), and 237–257 (LSMG…LLIV).

Belongs to the Lgt family.

It localises to the cell inner membrane. The catalysed reaction is L-cysteinyl-[prolipoprotein] + a 1,2-diacyl-sn-glycero-3-phospho-(1'-sn-glycerol) = an S-1,2-diacyl-sn-glyceryl-L-cysteinyl-[prolipoprotein] + sn-glycerol 1-phosphate + H(+). It functions in the pathway protein modification; lipoprotein biosynthesis (diacylglyceryl transfer). In terms of biological role, catalyzes the transfer of the diacylglyceryl group from phosphatidylglycerol to the sulfhydryl group of the N-terminal cysteine of a prolipoprotein, the first step in the formation of mature lipoproteins. The protein is Phosphatidylglycerol--prolipoprotein diacylglyceryl transferase of Methylobacillus flagellatus (strain ATCC 51484 / DSM 6875 / VKM B-1610 / KT).